Consider the following 290-residue polypeptide: 33 kDa chaperonin (290 aa).

Disulfide bonds link cysteine 235/cysteine 237 and cysteine 268/cysteine 271.

This sequence belongs to the HSP33 family. In terms of processing, under oxidizing conditions two disulfide bonds are formed involving the reactive cysteines. Under reducing conditions zinc is bound to the reactive cysteines and the protein is inactive.

It localises to the cytoplasm. Its function is as follows. Redox regulated molecular chaperone. Protects both thermally unfolding and oxidatively damaged proteins from irreversible aggregation. Plays an important role in the bacterial defense system toward oxidative stress. The protein is 33 kDa chaperonin of Streptococcus equi subsp. equi (strain 4047).